A 147-amino-acid chain; its full sequence is Hemoglobin subunit delta (147 aa).

The Globin domain occupies 3–147; it reads HLTADEKAAV…VAAALAHKYH (145 aa). Histidine 64 and histidine 93 together coordinate heme b.

It belongs to the globin family. In terms of assembly, heterotetramer of two delta chains and two alpha chains. In terms of tissue distribution, red blood cells.

The polypeptide is Hemoglobin subunit delta (HBD) (Carlito syrichta (Philippine tarsier)).